The following is a 430-amino-acid chain: tRNA(Ile)-lysidine synthase (430 aa).

Residue 24 to 29 (SGGLDS) coordinates ATP.

The protein belongs to the tRNA(Ile)-lysidine synthase family.

The protein resides in the cytoplasm. The catalysed reaction is cytidine(34) in tRNA(Ile2) + L-lysine + ATP = lysidine(34) in tRNA(Ile2) + AMP + diphosphate + H(+). Its function is as follows. Ligates lysine onto the cytidine present at position 34 of the AUA codon-specific tRNA(Ile) that contains the anticodon CAU, in an ATP-dependent manner. Cytidine is converted to lysidine, thus changing the amino acid specificity of the tRNA from methionine to isoleucine. The protein is tRNA(Ile)-lysidine synthase of Haemophilus influenzae (strain PittEE).